Here is a 210-residue protein sequence, read N- to C-terminus: Thymidylate kinase (210 aa).

Position 16–23 (16–23 (GGDGVGKS)) interacts with ATP.

It belongs to the thymidylate kinase family.

It carries out the reaction dTMP + ATP = dTDP + ADP. In terms of biological role, phosphorylation of dTMP to form dTDP in both de novo and salvage pathways of dTTP synthesis. This chain is Thymidylate kinase, found in Leifsonia xyli subsp. xyli (strain CTCB07).